A 396-amino-acid polypeptide reads, in one-letter code: 1-deoxy-D-xylulose 5-phosphate reductoisomerase (396 aa).

Positions 15, 16, 17, 18, 41, and 129 each coordinate NADPH. Lys-130 lines the 1-deoxy-D-xylulose 5-phosphate pocket. Glu-131 provides a ligand contact to NADPH. A Mn(2+)-binding site is contributed by Asp-155. Ser-156, Glu-157, Ser-182, and His-205 together coordinate 1-deoxy-D-xylulose 5-phosphate. Position 157 (Glu-157) interacts with Mn(2+). Gly-211 contributes to the NADPH binding site. 1-deoxy-D-xylulose 5-phosphate is bound by residues Ser-218, Asn-223, Lys-224, and Glu-227. Position 227 (Glu-227) interacts with Mn(2+).

The protein belongs to the DXR family. Mg(2+) is required as a cofactor. Mn(2+) serves as cofactor.

It catalyses the reaction 2-C-methyl-D-erythritol 4-phosphate + NADP(+) = 1-deoxy-D-xylulose 5-phosphate + NADPH + H(+). It functions in the pathway isoprenoid biosynthesis; isopentenyl diphosphate biosynthesis via DXP pathway; isopentenyl diphosphate from 1-deoxy-D-xylulose 5-phosphate: step 1/6. Functionally, catalyzes the NADPH-dependent rearrangement and reduction of 1-deoxy-D-xylulose-5-phosphate (DXP) to 2-C-methyl-D-erythritol 4-phosphate (MEP). This is 1-deoxy-D-xylulose 5-phosphate reductoisomerase from Xanthomonas campestris pv. campestris (strain 8004).